Consider the following 160-residue polypeptide: CXXC motif containing zinc binding protein (160 aa).

Residues C33, C36, C67, and C70 each coordinate Zn(2+). Position 75 is a phosphoserine (S75).

The protein belongs to the UPF0587 family. As to quaternary structure, monomer.

The polypeptide is CXXC motif containing zinc binding protein (Homo sapiens (Human)).